A 180-amino-acid chain; its full sequence is Cancer/testis antigen 1 (180 aa).

2 stretches are compositionally biased toward gly residues: residues 1–47 and 55–66; these read MQAE…GPRG and GPGGGAPRGPHG. The interval 1–66 is disordered; that stretch reads MQAEGRGTGG…GGGAPRGPHG (66 aa).

Belongs to the CTAG/PCC1 family. In terms of tissue distribution, expressed in testis and ovary and in a wide variety of cancers. Detected in uterine myometrium. Expressed from 18 weeks until birth in human fetal testis. In the adult testis, is strongly expressed in spermatogonia and in primary spermatocytes, but not in post-meiotic cells or in testicular somatic cells (at protein level).

The protein resides in the cytoplasm. This Homo sapiens (Human) protein is Cancer/testis antigen 1 (CTAG1A).